Here is a 968-residue protein sequence, read N- to C-terminus: Glycine dehydrogenase (decarboxylating) (968 aa).

Residue K717 is modified to N6-(pyridoxal phosphate)lysine.

The protein belongs to the GcvP family. The glycine cleavage system is composed of four proteins: P, T, L and H. The cofactor is pyridoxal 5'-phosphate.

The catalysed reaction is N(6)-[(R)-lipoyl]-L-lysyl-[glycine-cleavage complex H protein] + glycine + H(+) = N(6)-[(R)-S(8)-aminomethyldihydrolipoyl]-L-lysyl-[glycine-cleavage complex H protein] + CO2. The glycine cleavage system catalyzes the degradation of glycine. The P protein binds the alpha-amino group of glycine through its pyridoxal phosphate cofactor; CO(2) is released and the remaining methylamine moiety is then transferred to the lipoamide cofactor of the H protein. The chain is Glycine dehydrogenase (decarboxylating) from Tropheryma whipplei (strain TW08/27) (Whipple's bacillus).